Here is an 89-residue protein sequence, read N- to C-terminus: ATP synthase subunit c, sodium ion specific (89 aa).

Transmembrane regions (helical) follow at residues 9-29 and 68-88; these read VVLAASAVGAGAAMIAGIGPG and GIYSLVIALILLYANPFVGLL.

Belongs to the ATPase C chain family. F-type ATPases have 2 components, F(1) - the catalytic core - and F(0) - the membrane sodium channel. F(1) has five subunits: alpha(3), beta(3), gamma(1), delta(1), epsilon(1). F(0) has three main subunits: a(1), b(2) and c(10-14). The alpha and beta chains form an alternating ring which encloses part of the gamma chain. F(1) is attached to F(0) by a central stalk formed by the gamma and epsilon chains, while a peripheral stalk is formed by the delta and b chains.

It is found in the cell membrane. Its function is as follows. F(1)F(0) ATP synthase produces ATP from ADP in the presence of a proton or sodium gradient. F-type ATPases consist of two structural domains, F(1) containing the extramembraneous catalytic core and F(0) containing the membrane sodium channel, linked together by a central stalk and a peripheral stalk. During catalysis, ATP synthesis in the catalytic domain of F(1) is coupled via a rotary mechanism of the central stalk subunits to sodium translocation. In terms of biological role, key component of the F(0) channel; it plays a direct role in translocation across the membrane. A homomeric c-ring of between 10-14 subunits forms the central stalk rotor element with the F(1) delta and epsilon subunits. This is ATP synthase subunit c, sodium ion specific (atpE) from Propionigenium modestum.